A 270-amino-acid polypeptide reads, in one-letter code: MSLSFLLLLFLSHLILSAWAQGEKRLAPKGQPGPAATERNPGGASSRRSSSSTATSSSSPASSSSAASRGGPGSSLEQSSFQWSPSGRRTGSLYCRVGIGFHLQIYPDGKVNGSHEANMLSILEIFAVSQGIVGIRGVFSNKFLAMSKKGKLHASAKFTDDCKFRERFQENSYNTYASAIHRTEKTGREWYVALNKRGKAKRGCSPRVKPQHVSTHFLPRFKQLEQPELSFTVTVPEKKKPPNPVKPKVPLSAPRRSPNTVKYRLKFRFG.

An N-terminal signal peptide occupies residues 1–20; it reads MSLSFLLLLFLSHLILSAWA. The interval 25–86 is disordered; it reads RLAPKGQPGP…EQSSFQWSPS (62 aa). Positions 41–69 are enriched in low complexity; sequence PGGASSRRSSSSTATSSSSPASSSSAASR. Positions 76 to 86 are enriched in polar residues; that stretch reads LEQSSFQWSPS. N112 carries N-linked (GlcNAc...) asparagine glycosylation. A disordered region spans residues 237 to 257; sequence EKKKPPNPVKPKVPLSAPRRS.

This sequence belongs to the heparin-binding growth factors family. As to quaternary structure, interacts with FGFR1 and FGFR2. Affinity between fibroblast growth factors (FGFs) and their receptors is increased by heparan sulfate glycosaminoglycans that function as coreceptors.

The protein localises to the secreted. In terms of biological role, plays an important role in the regulation of cell proliferation and cell differentiation. Required for normal regulation of the hair growth cycle. Functions as an inhibitor of hair elongation by promoting progression from anagen, the growth phase of the hair follicle, into catagen the apoptosis-induced regression phase. This is Fibroblast growth factor 5 (FGF5) from Bos taurus (Bovine).